The following is a 123-amino-acid chain: Maintenance of telomere capping protein 3, mitochondrial (123 aa).

The N-terminal 37 residues, 1–37 (MMGRNGIRLALKRSFSTYQPPVVEITNITKLWPTLRP), are a transit peptide targeting the mitochondrion.

It localises to the mitochondrion. Its function is as follows. May be involved in telomere capping. In Saccharomyces cerevisiae (strain ATCC 204508 / S288c) (Baker's yeast), this protein is Maintenance of telomere capping protein 3, mitochondrial (MTC3).